Here is a 277-residue protein sequence, read N- to C-terminus: Raffinose operon transcriptional regulatory protein RafR (277 aa).

An HTH araC/xylS-type domain is found at asparagine 176 to serine 274. 2 consecutive DNA-binding regions (H-T-H motif) follow at residues methionine 193 to alanine 214 and valine 241 to serine 264.

Involved in the regulation of the raffinose-operon. This is Raffinose operon transcriptional regulatory protein RafR (rafR) from Pediococcus pentosaceus.